Consider the following 240-residue polypeptide: Lipoprotein-releasing system ATP-binding protein LolD (240 aa).

In terms of domain architecture, ABC transporter spans 15-240 (IRAERLGKTY…GLRELTSAEV (226 aa)). 51 to 58 (GASGAGKS) lines the ATP pocket.

It belongs to the ABC transporter superfamily. Lipoprotein translocase (TC 3.A.1.125) family. As to quaternary structure, the complex is composed of two ATP-binding proteins (LolD) and two transmembrane proteins (LolC and LolE).

Its subcellular location is the cell inner membrane. Part of the ABC transporter complex LolCDE involved in the translocation of mature outer membrane-directed lipoproteins, from the inner membrane to the periplasmic chaperone, LolA. Responsible for the formation of the LolA-lipoprotein complex in an ATP-dependent manner. The polypeptide is Lipoprotein-releasing system ATP-binding protein LolD (Xylella fastidiosa (strain 9a5c)).